The sequence spans 201 residues: ATP-dependent Clp protease proteolytic subunit 2 (201 aa).

The active-site Nucleophile is serine 101. Residue histidine 126 is part of the active site.

This sequence belongs to the peptidase S14 family. As to quaternary structure, fourteen ClpP subunits assemble into 2 heptameric rings which stack back to back to give a disk-like structure with a central cavity, resembling the structure of eukaryotic proteasomes.

Its subcellular location is the cytoplasm. The enzyme catalyses Hydrolysis of proteins to small peptides in the presence of ATP and magnesium. alpha-casein is the usual test substrate. In the absence of ATP, only oligopeptides shorter than five residues are hydrolyzed (such as succinyl-Leu-Tyr-|-NHMec, and Leu-Tyr-Leu-|-Tyr-Trp, in which cleavage of the -Tyr-|-Leu- and -Tyr-|-Trp bonds also occurs).. Its function is as follows. Cleaves peptides in various proteins in a process that requires ATP hydrolysis. Has a chymotrypsin-like activity. Plays a major role in the degradation of misfolded proteins. The sequence is that of ATP-dependent Clp protease proteolytic subunit 2 from Prochlorococcus marinus subsp. pastoris (strain CCMP1986 / NIES-2087 / MED4).